A 341-amino-acid polypeptide reads, in one-letter code: L-threonine 3-dehydrogenase (341 aa).

A Zn(2+)-binding site is contributed by Cys38. Residues Thr40 and His43 each act as charge relay system in the active site. Residues His63, Glu64, Cys93, Cys96, Cys99, and Cys107 each contribute to the Zn(2+) site. NAD(+) is bound by residues Ile175, Asp195, Arg200, 262 to 264 (LGI), and 286 to 287 (IY).

Belongs to the zinc-containing alcohol dehydrogenase family. Homotetramer. Requires Zn(2+) as cofactor.

It is found in the cytoplasm. The enzyme catalyses L-threonine + NAD(+) = (2S)-2-amino-3-oxobutanoate + NADH + H(+). It participates in amino-acid degradation; L-threonine degradation via oxydo-reductase pathway; glycine from L-threonine: step 1/2. Catalyzes the NAD(+)-dependent oxidation of L-threonine to 2-amino-3-ketobutyrate. This is L-threonine 3-dehydrogenase from Escherichia coli O157:H7.